The primary structure comprises 495 residues: Aspartyl/glutamyl-tRNA(Asn/Gln) amidotransferase subunit B (495 aa).

It belongs to the GatB/GatE family. GatB subfamily. In terms of assembly, heterotrimer of A, B and C subunits.

The enzyme catalyses L-glutamyl-tRNA(Gln) + L-glutamine + ATP + H2O = L-glutaminyl-tRNA(Gln) + L-glutamate + ADP + phosphate + H(+). It carries out the reaction L-aspartyl-tRNA(Asn) + L-glutamine + ATP + H2O = L-asparaginyl-tRNA(Asn) + L-glutamate + ADP + phosphate + 2 H(+). Its function is as follows. Allows the formation of correctly charged Asn-tRNA(Asn) or Gln-tRNA(Gln) through the transamidation of misacylated Asp-tRNA(Asn) or Glu-tRNA(Gln) in organisms which lack either or both of asparaginyl-tRNA or glutaminyl-tRNA synthetases. The reaction takes place in the presence of glutamine and ATP through an activated phospho-Asp-tRNA(Asn) or phospho-Glu-tRNA(Gln). The protein is Aspartyl/glutamyl-tRNA(Asn/Gln) amidotransferase subunit B of Methanosarcina mazei (strain ATCC BAA-159 / DSM 3647 / Goe1 / Go1 / JCM 11833 / OCM 88) (Methanosarcina frisia).